The primary structure comprises 397 residues: E3 ubiquitin-protein ligase RNF149 (397 aa).

A signal peptide spans 1–20 (MLRWLCLYSALCALTHGSSA). Residues 39–49 (TNSSVTGSTES) are compositionally biased toward polar residues. Positions 39-60 (TNSSVTGSTESGRYGDSSPKES) are disordered. Asn40 and Asn140 each carry an N-linked (GlcNAc...) asparagine glycan. Positions 83 to 170 (YIVPGTSAAA…PKGMEIMEPL (88 aa)) constitute a PA domain. The helical transmembrane segment at 196–216 (VVFVAIAFITMMIISLAWLIF) threads the bilayer. Asn231 is a glycosylation site (N-linked (GlcNAc...) asparagine). The segment at 264–305 (CAVCIENYKTKDLVRILPCKHIFHRLCIDPWLIEHRTCPMCK) adopts an RING-type; atypical zinc-finger fold. The interval 341–397 (SITQEESRSEGNNLPSSSTGSSLQQSNSVKDDAGETTALLDDPGNDNAAATHTQDSH) is disordered. Positions 351 to 368 (GNNLPSSSTGSSLQQSNS) are enriched in low complexity. The span at 388 to 397 (AAATHTQDSH) shows a compositional bias: polar residues.

The protein resides in the membrane. The enzyme catalyses S-ubiquitinyl-[E2 ubiquitin-conjugating enzyme]-L-cysteine + [acceptor protein]-L-lysine = [E2 ubiquitin-conjugating enzyme]-L-cysteine + N(6)-ubiquitinyl-[acceptor protein]-L-lysine.. It participates in protein modification; protein ubiquitination. E3 ubiquitin-protein ligase. Ubiquitinates BRAF, inducing its proteasomal degradation. The sequence is that of E3 ubiquitin-protein ligase RNF149 (rnf149) from Xenopus laevis (African clawed frog).